Consider the following 100-residue polypeptide: Cytochrome bo(3) ubiquinol oxidase subunit 4 (100 aa).

Over 1–9 (MLKNRYLKY) the chain is Cytoplasmic. Residues 10–32 (LFILILLSILSIMPIFAIIYRIF) form a helical membrane-spanning segment. Residues 33-36 (SRNY) lie on the Extracellular side of the membrane. Residues 37-59 (LYAFIIVCLFFQILAHIKFFLNL) form a helical membrane-spanning segment. At 60–68 (DFSLEQRWK) the chain is on the cytoplasmic side. Residues 69–90 (LISVIFSLVVGLIILLGSIWVI) form a helical membrane-spanning segment. Residues 91-100 (KNLNNNLCIM) are Extracellular-facing.

The protein belongs to the cytochrome c oxidase bacterial subunit 4 family. Heterooctamer of two A chains, two B chains, two C chains and two D chains.

It localises to the cell membrane. In terms of biological role, cytochrome bo(3) ubiquinol terminal oxidase is the component of the aerobic respiratory chain of E.coli that predominates when cells are grown at high aeration. Has proton pump activity across the membrane in addition to electron transfer, pumping 2 protons/electron. The chain is Cytochrome bo(3) ubiquinol oxidase subunit 4 (cyoD) from Buchnera aphidicola subsp. Baizongia pistaciae (strain Bp).